A 270-amino-acid chain; its full sequence is Acetylglutamate kinase (270 aa).

Substrate is bound by residues 53–54, Arg75, and Asn167; that span reads GG.

Belongs to the acetylglutamate kinase family. ArgB subfamily.

Its subcellular location is the cytoplasm. It carries out the reaction N-acetyl-L-glutamate + ATP = N-acetyl-L-glutamyl 5-phosphate + ADP. Its pathway is amino-acid biosynthesis; L-arginine biosynthesis; N(2)-acetyl-L-ornithine from L-glutamate: step 2/4. In terms of biological role, catalyzes the ATP-dependent phosphorylation of N-acetyl-L-glutamate. The polypeptide is Acetylglutamate kinase (Shewanella halifaxensis (strain HAW-EB4)).